A 783-amino-acid chain; its full sequence is Polyadenylate-binding protein, cytoplasmic and nuclear (783 aa).

Positions 16–65 (DLGNTSLGGGDNRAAPAINTNVAPGEYQTADPDTAGPTPSSAAPHPQSSA) are disordered. Residues 54 to 65 (PSSAAPHPQSSA) are compositionally biased toward low complexity. 4 consecutive RRM domains span residues 65–143 (ASLY…WSQR), 153–230 (GNVF…YHIP), 246–323 (TNIY…RAQK), and 349–471 (VNLY…LAQR). Disordered stretches follow at residues 381 to 428 (MRDA…KGDR), 596 to 671 (AAAL…AAGG), and 752 to 783 (VKSQQGPGQGPAPTQGEAEAEKPKEEKAEEKA). Residues 396–406 (GKDKENKKEGE) show a composition bias toward basic and acidic residues. The span at 407–416 (QAAEAEGEAE) shows a compositional bias: acidic residues. Over residues 417–428 (GAEKKTEKKGDR) the composition is skewed to basic and acidic residues. The segment covering 601–614 (NGRGGPGGPGGRGM) has biased composition (gly residues). A compositionally biased stretch (low complexity) spans 630–641 (AGFPPNGRPQNG). Residues 642–655 (NMGGRGGPGRGGNF) show a composition bias toward gly residues. A compositionally biased stretch (low complexity) spans 656 to 671 (AAGRGAPPAGPLAAGG). A PABC domain is found at 676-753 (SSLLQSQLTA…AMAVYDEYVK (78 aa)). The segment covering 770-783 (EAEKPKEEKAEEKA) has biased composition (basic and acidic residues).

Belongs to the polyadenylate-binding protein type-1 family.

The protein resides in the cytoplasm. Its subcellular location is the nucleus. Its function is as follows. Binds the poly(A) tail of mRNA. Appears to be an important mediator of the multiple roles of the poly(A) tail in mRNA biogenesis, stability and translation. In the nucleus, involved in both mRNA cleavage and polyadenylation. Is also required for efficient mRNA export to the cytoplasm. Acts in concert with a poly(A)-specific nuclease (PAN) to affect poly(A) tail shortening, which may occur concomitantly with either nucleocytoplasmic mRNA transport or translational initiation. In the cytoplasm, stimulates translation initiation and regulates mRNA decay through translation termination-coupled poly(A) shortening, probably mediated by PAN. The polypeptide is Polyadenylate-binding protein, cytoplasmic and nuclear (PAB1) (Chaetomium globosum (strain ATCC 6205 / CBS 148.51 / DSM 1962 / NBRC 6347 / NRRL 1970) (Soil fungus)).